Consider the following 759-residue polypeptide: Cullin-4A (759 aa).

Lys-8 is covalently cross-linked (Glycyl lysine isopeptide (Lys-Gly) (interchain with G-Cter in SUMO2)). Phosphoserine is present on Ser-10. Lys-33 participates in a covalent cross-link: Glycyl lysine isopeptide (Lys-Gly) (interchain with G-Cter in ubiquitin). Positions 691-751 constitute a Cullin neddylation domain; that stretch reads DRQYQIDAAI…RDYMERDKDN (61 aa). Residue Lys-705 forms a Glycyl lysine isopeptide (Lys-Gly) (interchain with G-Cter in NEDD8) linkage.

It belongs to the cullin family. In terms of assembly, can self-associate. Component of multiple DCX (DDB1-CUL4-X-box) E3 ubiquitin-protein ligase complexes that seem to consist of DDB1, CUL4A or CUL4B, RBX1 and a variable substrate recognition component which seems to belong to a protein family described as DCAF (Ddb1- and Cul4-associated factor) or CDW (CUL4-DDB1-associated WD40-repeat) proteins. Component of the CSA complex (DCX(ERCC8) complex) containing ERCC8, RBX1, DDB1 and CUL4A; the CSA complex interacts with RNA polymerase II; upon UV irradiation it interacts with the COP9 signalosome and preferentially with the hyperphosphorylated form of RNA polymerase II. Component of the DCX(DET1-COP1) complex with the substrate recognition component DET1 and COP1. Component of the DCX(DDB2) complex with the substrate recognition component DDB2. Component of the DCX(DTL) complex with the putative substrate recognition component DTL. Component of DCX complexes part of the DesCEND (destruction via C-end degrons) pathway, which contain either TRPC4AP or DCAF12 as substrate-recognition component. Component of the DCX(AMBRA1) complex with the substrate recognition component AMBRA1. Interacts with DDB1, RBX1, RNF7, CDT1, TIP120A/CAND1, SKP2, CDKN1B, MDM2, TP53 and HOXA9. Interacts with DDB2; the interactions with DDB2 and CAND1 are mutually exclusive. Interacts with DCAF1, DTL, DDA1, DCAF6, DCAF4, DCAF16, DCAF17, DET1, WDTC1, DCAF5, DCAF11, WDR24A, COP1, PAFAH1B1, ERCC8, GRWD1, FBXW5, RBBP7, GNB2, WSB1, WSB2, NUP43, PWP1, FBXW8, ATG16L1, KATNB1, RBBP4, RBBP5, LRWD1 and DCAF8. May interact with WDR26, WDR51B, SNRNP40, WDR61, WDR76, WDR5. Interacts (when neddylated) with ARIH1; leading to activate the E3 ligase activity of ARIH1. The DDB1-CUL4A complex interacts with CRY1. Interacts (unneddylated form) with DCUN1D1, DCUN1D2, DCUN1D3, DCUN1D4 and DCUN1D5; these interactions promote the cullin neddylation. As to quaternary structure, (Microbial infection) Interacts with Epstein-Barr virus BPLF1. Neddylated; required for activity of cullin-RING-based E3 ubiquitin-protein ligase complexes. Deneddylated via its interaction with the COP9 signalosome (CSN) complex. Post-translationally, (Microbial infection) Deneddylated by Epstein-Barr virus BPLF1 leading to a S-phase-like environment that is required for efficient replication of the viral genome.

It functions in the pathway protein modification; protein ubiquitination. In terms of biological role, core component of multiple cullin-RING-based E3 ubiquitin-protein ligase complexes which mediate the ubiquitination of target proteins. As a scaffold protein may contribute to catalysis through positioning of the substrate and the ubiquitin-conjugating enzyme. The E3 ubiquitin-protein ligase activity of the complex is dependent on the neddylation of the cullin subunit and is inhibited by the association of the deneddylated cullin subunit with TIP120A/CAND1. The functional specificity of the E3 ubiquitin-protein ligase complex depends on the variable substrate recognition component. DCX(DET1-COP1) directs ubiquitination of JUN. DCX(DDB2) directs ubiquitination of XPC. DCX(DDB2) ubiquitinates histones H3-H4 and is required for efficient histone deposition during replication-coupled (H3.1) and replication-independent (H3.3) nucleosome assembly, probably by facilitating the transfer of H3 from ASF1A/ASF1B to other chaperones involved in histone deposition. DCX(DTL) plays a role in PCNA-dependent polyubiquitination of CDT1 and MDM2-dependent ubiquitination of p53/TP53 in response to radiation-induced DNA damage and during DNA replication. DCX(DTL) directs autoubiquitination of DTL. In association with DDB1 and SKP2 probably is involved in ubiquitination of CDKN1B/p27kip. Is involved in ubiquitination of HOXA9. The DDB1-CUL4A-DTL E3 ligase complex regulates the circadian clock function by mediating the ubiquitination and degradation of CRY1. The DCX(ERCC8) complex (also named CSA complex) plays a role in transcription-coupled repair (TCR). A number of DCX complexes (containing either TRPC4AP or DCAF12 as substrate-recognition component) are part of the DesCEND (destruction via C-end degrons) pathway, which recognizes a C-degron located at the extreme C terminus of target proteins, leading to their ubiquitination and degradation. The DCX(AMBRA1) complex is a master regulator of the transition from G1 to S cell phase by mediating ubiquitination of phosphorylated cyclin-D (CCND1, CCND2 and CCND3). The DCX(AMBRA1) complex also acts as a regulator of Cul5-RING (CRL5) E3 ubiquitin-protein ligase complexes by mediating ubiquitination and degradation of Elongin-C (ELOC) component of CRL5 complexes. With CUL4B, contributes to ribosome biogenesis. The chain is Cullin-4A from Homo sapiens (Human).